A 316-amino-acid chain; its full sequence is Low affinity immunoglobulin gamma Fc region receptor II-a (316 aa).

A signal peptide spans 1-35; the sequence is MAMETQMSQNVCPRNLWLLQPLTVLLLLASADSQA. Residues 36 to 216 are Extracellular-facing; it reads APPKAVLKLE…PSVGSSSPVG (181 aa). Ig-like C2-type domains are found at residues 38 to 117 and 121 to 203; these read PKAV…VHLT and EWLV…VTIT. 2 disulfides stabilise this stretch: cysteine 61–cysteine 103 and cysteine 142–cysteine 186. N-linked (GlcNAc...) asparagine glycosylation is found at asparagine 96, asparagine 170, and asparagine 177. A helical membrane pass occupies residues 217-239; that stretch reads IIVAVVIATAVAAIVAAVVALIY. At 240 to 316 the chain is on the cytoplasmic side; that stretch reads CRKKRISANS…PPNDHVNSNN (77 aa). Phosphotyrosine; by SRC-type Tyr-kinases occurs at positions 287 and 303.

Interacts with INPP5D/SHIP1 and INPPL1/SHIP2, regulating its function. Interacts with APCS and FGR. Interacts with HCK. In terms of processing, phosphorylated by SRC-type Tyr-kinases such as HCK, LYN, BLK, FYN and SYK.

The protein localises to the cell membrane. In terms of biological role, binds to the Fc region of immunoglobulins gamma. Low affinity receptor. By binding to IgG it initiates cellular responses against pathogens and soluble antigens. Promotes phagocytosis of opsonized antigens. The sequence is that of Low affinity immunoglobulin gamma Fc region receptor II-a (FCGR2A) from Pan troglodytes (Chimpanzee).